The primary structure comprises 373 residues: P2Y purinoceptor 1 (373 aa).

Residues 1-51 (MTEVPWSVVPNGTDAAFLAGLGSLWGNSTVASTAAVSSSFQCALTKTGFQF) are Extracellular-facing. Residues Asn-11 and Asn-27 are each glycosylated (N-linked (GlcNAc...) asparagine). Cystine bridges form between Cys-42-Cys-296 and Cys-124-Cys-202. Lys-46 is a binding site for ADP. The helical transmembrane segment at 52-74 (YYLPAVYILVFIIGFLGNSVAIW) threads the bilayer. Residues 75–87 (MFVFHMKPWSGIS) lie on the Cytoplasmic side of the membrane. A helical transmembrane segment spans residues 88 to 109 (VYMFNLALADFLYVLTLPALIF). Over 110–125 (YYFNKTDWIFGDAMCK) the chain is Extracellular. A glycan (N-linked (GlcNAc...) asparagine) is linked at Asn-113. A helical transmembrane segment spans residues 126–147 (LQRFIFHVNLYGSILFLTCISA). Residues 148 to 166 (HRYSGVVYPLKSLGRLKKK) lie on the Cytoplasmic side of the membrane. A helical membrane pass occupies residues 167 to 188 (NAIYVSVLVWLIVVVAISPILF). Residues 189 to 214 (YSGTGTRKNKTVTCYDTTSNDYLRSY) are Extracellular-facing. N-linked (GlcNAc...) asparagine glycosylation occurs at Asn-197. 203–205 (YDT) lines the ADP pocket. Residues 215-237 (FIYSMCTTVAMFCIPLVLILGCY) form a helical membrane-spanning segment. The Cytoplasmic segment spans residues 238 to 260 (GLIVKALIYNDLDNSPLRRKSIY). A helical transmembrane segment spans residues 261–284 (LVIIVLTVFAVSYIPFHVMKTMNL). ADP is bound by residues 283–287 (NLRAR), 303–306 (YATY), and Arg-310. Over 285 to 303 (RARLDFQTPEMCDFNDRVY) the chain is Extracellular. A helical membrane pass occupies residues 304 to 325 (ATYQVTRGLASLNSCVDPILYF). At 326 to 373 (LAGDTFRRRLSRATRKASRRSEANLQSKSEEMTLNILSEFKQNGDTSL) the chain is on the cytoplasmic side.

Belongs to the G-protein coupled receptor 1 family.

It localises to the cell membrane. In terms of biological role, receptor for extracellular adenine nucleotides such as ADP. In platelets, binding to ADP leads to mobilization of intracellular calcium ions via activation of phospholipase C, a change in platelet shape, and ultimately platelet aggregation. In Mus musculus (Mouse), this protein is P2Y purinoceptor 1 (P2ry1).